Consider the following 183-residue polypeptide: Non-classical export protein 2 homolog (183 aa).

Residues 1-8 lie on the Cytoplasmic side of the membrane; the sequence is MVGIRQYG. Residues 9-29 form a helical membrane-spanning segment; that stretch reads VFTWVFRTFQLAIDTIVLALA. Over 30-44 the chain is Extracellular; sequence SALVNQQTSGGSPGK. Residues 45–65 traverse the membrane as a helical segment; sequence INFSVAVGSFAILTFFLTAVG. Residues 66–75 are Cytoplasmic-facing; that stretch reads RFLPTILGNP. Residues 76-96 traverse the membrane as a helical segment; it reads WLIAFYDFVNWVFALTGGCCI. The Extracellular segment spans residues 97–131; the sequence is AVAIRVHACDNQKYLDRNHYTQGSMRRCQELKALC. A helical transmembrane segment spans residues 132 to 152; sequence FFLWFMFGLYVASFIVQIFIA. Over 153-183 the chain is Cytoplasmic; that stretch reads KNDTPNYTFRGRGRGKGSGPAVAPRPVMSAV. The interval 163-183 is disordered; it reads GRGRGKGSGPAVAPRPVMSAV.

It belongs to the NCE102 family.

Its subcellular location is the cytoplasm. It localises to the golgi apparatus membrane. The protein localises to the cell membrane. Its function is as follows. Involved in membrane organization and might act as a sensor of sphingolipids that regulates plasma membrane function. Involved in a novel pathway of export of proteins that lack a cleavable signal sequence. This chain is Non-classical export protein 2 homolog (fhn1), found in Schizosaccharomyces pombe (strain 972 / ATCC 24843) (Fission yeast).